A 365-amino-acid polypeptide reads, in one-letter code: Class I histocompatibility antigen, Gogo-C*0101/C*0102 alpha chain (365 aa).

An N-terminal signal peptide occupies residues methionine 1–alanine 24. The alpha-1 stretch occupies residues glycine 25–aspartate 114. Residues glycine 25–isoleucine 308 lie on the Extracellular side of the membrane. N-linked (GlcNAc...) asparagine glycosylation occurs at asparagine 110. The segment at glycine 115–alanine 206 is alpha-2. Disulfide bonds link cysteine 125–cysteine 188 and cysteine 227–cysteine 283. An alpha-3 region spans residues aspartate 207–tryptophan 298. Residues proline 209–arginine 297 form the Ig-like C1-type domain. The tract at residues glutamate 299 to isoleucine 308 is connecting peptide. Residues valine 309–cysteine 332 form a helical membrane-spanning segment. Over arginine 333–alanine 365 the chain is Cytoplasmic. Serine 356 and serine 359 each carry phosphoserine.

It belongs to the MHC class I family. Heterodimer of an alpha chain and a beta chain (beta-2-microglobulin).

The protein resides in the membrane. Its function is as follows. Involved in the presentation of foreign antigens to the immune system. The polypeptide is Class I histocompatibility antigen, Gogo-C*0101/C*0102 alpha chain (Gorilla gorilla gorilla (Western lowland gorilla)).